The following is a 109-amino-acid chain: Small ribosomal subunit protein uS17 (109 aa).

The protein belongs to the universal ribosomal protein uS17 family. As to quaternary structure, part of the 30S ribosomal subunit.

Its function is as follows. One of the primary rRNA binding proteins, it binds specifically to the 5'-end of 16S ribosomal RNA. The protein is Small ribosomal subunit protein uS17 of Methanosarcina mazei (strain ATCC BAA-159 / DSM 3647 / Goe1 / Go1 / JCM 11833 / OCM 88) (Methanosarcina frisia).